Reading from the N-terminus, the 293-residue chain is 1D-myo-inositol 2-acetamido-2-deoxy-alpha-D-glucopyranoside deacetylase (293 aa).

The Zn(2+) site is built by histidine 16, aspartate 19, and histidine 156.

This sequence belongs to the MshB deacetylase family. Zn(2+) serves as cofactor.

The catalysed reaction is 1D-myo-inositol 2-acetamido-2-deoxy-alpha-D-glucopyranoside + H2O = 1D-myo-inositol 2-amino-2-deoxy-alpha-D-glucopyranoside + acetate. Catalyzes the deacetylation of 1D-myo-inositol 2-acetamido-2-deoxy-alpha-D-glucopyranoside (GlcNAc-Ins) in the mycothiol biosynthesis pathway. The protein is 1D-myo-inositol 2-acetamido-2-deoxy-alpha-D-glucopyranoside deacetylase of Nakamurella multipartita (strain ATCC 700099 / DSM 44233 / CIP 104796 / JCM 9543 / NBRC 105858 / Y-104) (Microsphaera multipartita).